Here is a 630-residue protein sequence, read N- to C-terminus: Chaperone protein DnaK (630 aa).

Thr197 bears the Phosphothreonine; by autocatalysis mark. Positions 604–618 are enriched in polar residues; sequence KNNESVKNNESVKNN. A disordered region spans residues 604–630; sequence KNNESVKNNESVKNNESVKDVDFEEIK. Residues 619 to 630 show a composition bias toward basic and acidic residues; the sequence is ESVKDVDFEEIK.

Belongs to the heat shock protein 70 family.

Its function is as follows. Acts as a chaperone. In Karelsulcia muelleri (strain GWSS) (Sulcia muelleri), this protein is Chaperone protein DnaK.